A 100-amino-acid polypeptide reads, in one-letter code: DNA base-flipping protein (100 aa).

Belongs to the MGMT family. ATL subfamily.

Its function is as follows. Involved in DNA damage recognition. Binds DNA containing O(6)-methylguanine. Binds to the damaged base and flips the base out of the DNA duplex into an extrahelical conformation, which allows processing by repair proteins. The protein is DNA base-flipping protein of Vibrio parahaemolyticus serotype O3:K6 (strain AQ3810).